The sequence spans 180 residues: Peptidyl-tRNA hydrolase (180 aa).

Residue tyrosine 15 participates in tRNA binding. The Proton acceptor role is filled by histidine 20. 3 residues coordinate tRNA: phenylalanine 67, asparagine 69, and asparagine 115.

It belongs to the PTH family. As to quaternary structure, monomer.

It localises to the cytoplasm. The catalysed reaction is an N-acyl-L-alpha-aminoacyl-tRNA + H2O = an N-acyl-L-amino acid + a tRNA + H(+). Hydrolyzes ribosome-free peptidyl-tRNAs (with 1 or more amino acids incorporated), which drop off the ribosome during protein synthesis, or as a result of ribosome stalling. In terms of biological role, catalyzes the release of premature peptidyl moieties from peptidyl-tRNA molecules trapped in stalled 50S ribosomal subunits, and thus maintains levels of free tRNAs and 50S ribosomes. The chain is Peptidyl-tRNA hydrolase from Chlamydia pneumoniae (Chlamydophila pneumoniae).